The primary structure comprises 484 residues: MTEKLIFELGSPGRQGVLFPANDVPEIPPHELLPRDLIREQEVPLPEVSEGDAVRHFVRLSRMNFGVDVGFYPLGSCTMKYNPKVAEDAAGLSGFANIHPYQPDEISQGALQLMYETQQDLAEITGMDAFTLQPAAGAQGELTGMLIIKAYLESKGETGRNKVIVPDSAHGTNPATAALCGFKVVEVKSDQRGGVDLAALKQLLGPDVAALMLTNPSTLGLFEDNITEIAALVHQAGGLLYYDGANLNAIMGYARPGDMGFDVVHLNLHKTFGTPHGGGGPGSGPVGVKAELAPFLPKPVIIQREGNYLPDYHRPQSIGRVKAFFANFSVIVKAYTYLRSLGGKGLKEVSEHAVLNANYLMKQLSDHFRVPYQRTCMHEFVVSPPEDMKEQGIKTLDIAKRLLDYGYHPPTVYFPLIVEEALMFEPTETESKETLDEFAHNLIKVLAEARENPDKLRNAPYTTPIRRLDEVMAARKPLVGWFPE.

At Lys270 the chain carries N6-(pyridoxal phosphate)lysine.

This sequence belongs to the GcvP family. C-terminal subunit subfamily. As to quaternary structure, the glycine cleavage system is composed of four proteins: P, T, L and H. In this organism, the P 'protein' is a heterodimer of two subunits. The cofactor is pyridoxal 5'-phosphate.

The enzyme catalyses N(6)-[(R)-lipoyl]-L-lysyl-[glycine-cleavage complex H protein] + glycine + H(+) = N(6)-[(R)-S(8)-aminomethyldihydrolipoyl]-L-lysyl-[glycine-cleavage complex H protein] + CO2. In terms of biological role, the glycine cleavage system catalyzes the degradation of glycine. The P protein binds the alpha-amino group of glycine through its pyridoxal phosphate cofactor; CO(2) is released and the remaining methylamine moiety is then transferred to the lipoamide cofactor of the H protein. This Desulforamulus reducens (strain ATCC BAA-1160 / DSM 100696 / MI-1) (Desulfotomaculum reducens) protein is Probable glycine dehydrogenase (decarboxylating) subunit 2.